The sequence spans 630 residues: MNNNPNRRGSLIGPLFIYFILAMLIFMSISQLNTSNITEISYTDLVNLINQDTIISLQIDTSGLIQAKAKNGQLFQVYAPTLLMDQAYVRALANDGIKVEYIQNTGASWWVTMLIYMLPLIILMFFWFWMFRRSGTGEGIPGANYRRNPARRYDSKRNKITFNDVAGIDEVKEELEDIVNFLKDPKNFSALGAKMPKGVLLSGPPGTGKTLVARAVAGEADVPFYFMSGSDFVELFVGVGAARVRDLFKEAKENSPAIIFIDELDAVGRQRGTGLGGGHDEREQTLNALLVEMDGFDPREGIVVMAATNRPDILDKALLRPGRFDKKIFLDVPDLRAREEIIKIHLRGKRIADDIDVKSLAQSTPGFVGADLENMVNEAALLAARDNRDHITNDDFQEAIERVIVGPARKSRKITPKEKKVITYHELGHAVLGYLLPYADPVHKITIVPRGQAALGYTMQLPSEDRFLITEPEIKDKIVGMLGGRAAEEIVFNEITTGAGNDLKRATELVREMVAQLGMSEKIGPIAWGEEEGEIFLGREITRMKNFSQETAKEIDSEIKNFILSSYEKAKNLLSENRKRLDLLAIYLYNKENISGKEFKKMMEMDIEELNDYVLKDKDVKETNLFVSYA.

Topologically, residues 1 to 8 (MNNNPNRR) are cytoplasmic. A helical membrane pass occupies residues 9-29 (GSLIGPLFIYFILAMLIFMSI). Topologically, residues 30–110 (SQLNTSNITE…YIQNTGASWW (81 aa)) are periplasmic. A helical transmembrane segment spans residues 111 to 131 (VTMLIYMLPLIILMFFWFWMF). Topologically, residues 132-630 (RRSGTGEGIP…KETNLFVSYA (499 aa)) are cytoplasmic. 203–210 (GPPGTGKT) provides a ligand contact to ATP. His425 lines the Zn(2+) pocket. Glu426 is a catalytic residue. 2 residues coordinate Zn(2+): His429 and Asp502.

In the central section; belongs to the AAA ATPase family. The protein in the C-terminal section; belongs to the peptidase M41 family. As to quaternary structure, homohexamer. The cofactor is Zn(2+).

It localises to the cell inner membrane. In terms of biological role, acts as a processive, ATP-dependent zinc metallopeptidase for both cytoplasmic and membrane proteins. Plays a role in the quality control of integral membrane proteins. This Petrotoga mobilis (strain DSM 10674 / SJ95) protein is ATP-dependent zinc metalloprotease FtsH 2.